A 249-amino-acid polypeptide reads, in one-letter code: DNA repair protein RecO (249 aa).

This sequence belongs to the RecO family.

In terms of biological role, involved in DNA repair and RecF pathway recombination. This Solidesulfovibrio magneticus (strain ATCC 700980 / DSM 13731 / RS-1) (Desulfovibrio magneticus) protein is DNA repair protein RecO.